The sequence spans 164 residues: Phosphopantetheine adenylyltransferase (164 aa).

Serine 9 lines the substrate pocket. ATP is bound by residues 9–10 (SF) and histidine 17. Positions 41, 78, and 92 each coordinate substrate. Residues 93 to 95 (GLR), glutamate 103, and 128 to 134 (SRPITAT) contribute to the ATP site.

This sequence belongs to the bacterial CoaD family. As to quaternary structure, homohexamer. Mg(2+) serves as cofactor.

It is found in the cytoplasm. The enzyme catalyses (R)-4'-phosphopantetheine + ATP + H(+) = 3'-dephospho-CoA + diphosphate. It participates in cofactor biosynthesis; coenzyme A biosynthesis; CoA from (R)-pantothenate: step 4/5. In terms of biological role, reversibly transfers an adenylyl group from ATP to 4'-phosphopantetheine, yielding dephospho-CoA (dPCoA) and pyrophosphate. In Sinorhizobium fredii (strain NBRC 101917 / NGR234), this protein is Phosphopantetheine adenylyltransferase.